Reading from the N-terminus, the 757-residue chain is Myb-related protein A (757 aa).

3 HTH myb-type domains span residues 30–81 (KKIC…QKVL), 82–137 (NPEL…NPEV), and 138–188 (KKSS…RRKV). 3 DNA-binding regions (H-T-H motif) span residues 58–81 (WAFIASHLQNRSDFQCQHRWQKVL), 110–133 (WSLIAKHLKGRIGKQCRERWHNHL), and 161–184 (WAEIAKLLPGRTDNSIKNHWNSTM). The interval 187-209 (KVEQEGYLQDGTKSSSERTGSST) is disordered. The segment covering 197–209 (GTKSSSERTGSST) has biased composition (polar residues). The transcriptional activation domain stretch occupies residues 235-300 (IPVYQYASPE…RLSSQAGSLP (66 aa)). The tract at residues 303–558 (SGSFVMEDCV…IRRSLLGSTP (256 aa)) is negative regulatory domain.

Component of the DREAM complex. In terms of tissue distribution, expressed ubiquitously.

The protein localises to the nucleus. In terms of biological role, strong transcriptional activator; DNA-binding protein that specifically recognize the sequence 5'-YAAC[GT]G-3'. Could have a role in the proliferation and/or differentiation of neurogenic, spermatogenic and B-lymphoid cells. The polypeptide is Myb-related protein A (MYBL1) (Gallus gallus (Chicken)).